The following is a 251-amino-acid chain: Mycofactocin precursor peptide peptidase (251 aa).

A divalent metal cation-binding residues include Glu-38, His-40, Asp-49, His-128, and Glu-167.

Belongs to the creatininase superfamily. In terms of assembly, homooctamer. It depends on Fe(2+) as a cofactor. Zn(2+) is required as a cofactor.

It catalyses the reaction [mycofactocin precursor peptide]-C-terminal glycyl-N-{5-[(4-hydroxyphenyl)methyl]-4,4-dimethyl-2-oxopyrrolidin-3-yl}acetamide + H2O = [mycofactocin precursor peptide]-C-terminal glycine + 3-amino-5-[(4-hydroxyphenyl)methyl]-4,4-dimethyl-2-pyrrolidin-2-one. Peptidase involved in the biosynthesis of the enzyme cofactor mycofactocin (MFT). Catalyzes cleavage of the MftC-modified MftA peptide to liberate its final two residues, which consist of a cross-linked valine-decarboxylated tyrosine dipeptide (named 3-amino-5-[(4-hydroxyphenyl)methyl]-4,4-dimethyl-2-pyrrolidin-2-one or ADHP). The protein is Mycofactocin precursor peptide peptidase (mftE) of Mycobacterium tuberculosis (strain CDC 1551 / Oshkosh).